Reading from the N-terminus, the 107-residue chain is Parvalbumin beta 2 (107 aa).

Residue Ser-1 is modified to N-acetylserine. 2 EF-hand domains span residues 37–72 (XSPD…FSAS) and 89–107 (DADG…LVKQ). Ca(2+)-binding residues include Asp-50, Asp-52, Ser-54, Phe-56, Glu-58, Glu-61, Asp-89, Asp-91, Asp-93, Met-95, and Glu-100.

It belongs to the parvalbumin family.

In muscle, parvalbumin is thought to be involved in relaxation after contraction. It binds two calcium ions. The protein is Parvalbumin beta 2 of Oncorhynchus mykiss (Rainbow trout).